Here is a 226-residue protein sequence, read N- to C-terminus: Type-5 uracil-DNA glycosylase (226 aa).

The [4Fe-4S] cluster site is built by cysteine 23, cysteine 26, cysteine 125, and cysteine 140.

Belongs to the uracil-DNA glycosylase (UDG) superfamily. Type 5 (UDGb) family.

DNA glycosylase with broad substrate specificity. Can remove uracil from double-stranded DNA containing either a U/G or U/A base pair. Can also process hydroxymethyluracil (mispaired with guanine or adenine), hypoxanthine and fluorouracil. Exhibits a clear preference for double-stranded DNA substrates, but can also process uracil in single-stranded DNA, with lower efficiency. The polypeptide is Type-5 uracil-DNA glycosylase (Pyrobaculum aerophilum (strain ATCC 51768 / DSM 7523 / JCM 9630 / CIP 104966 / NBRC 100827 / IM2)).